Here is a 468-residue protein sequence, read N- to C-terminus: UDP-N-acetylmuramate--L-alanine ligase (468 aa).

114–120 (GTHGKTT) provides a ligand contact to ATP.

Belongs to the MurCDEF family.

The protein localises to the cytoplasm. The enzyme catalyses UDP-N-acetyl-alpha-D-muramate + L-alanine + ATP = UDP-N-acetyl-alpha-D-muramoyl-L-alanine + ADP + phosphate + H(+). It participates in cell wall biogenesis; peptidoglycan biosynthesis. Functionally, cell wall formation. The chain is UDP-N-acetylmuramate--L-alanine ligase from Methylorubrum extorquens (strain PA1) (Methylobacterium extorquens).